A 257-amino-acid chain; its full sequence is Small ribosomal subunit protein eS1 (257 aa).

Residues 237-257 (GADGEKVDRPDDYEPPVQQEV) are disordered. Over residues 239–248 (DGEKVDRPDD) the composition is skewed to basic and acidic residues.

The protein belongs to the eukaryotic ribosomal protein eS1 family. In terms of assembly, component of the small ribosomal subunit. Mature ribosomes consist of a small (40S) and a large (60S) subunit. The 40S subunit contains about 33 different proteins and 1 molecule of RNA (18S). The 60S subunit contains about 49 different proteins and 3 molecules of RNA (28S, 5.8S and 5S).

The protein resides in the cytoplasm. This is Small ribosomal subunit protein eS1 from Caenorhabditis elegans.